A 143-amino-acid chain; its full sequence is Large ribosomal subunit protein uL13 (143 aa).

Belongs to the universal ribosomal protein uL13 family. As to quaternary structure, part of the 50S ribosomal subunit.

Its function is as follows. This protein is one of the early assembly proteins of the 50S ribosomal subunit, although it is not seen to bind rRNA by itself. It is important during the early stages of 50S assembly. This is Large ribosomal subunit protein uL13 from Caldanaerobacter subterraneus subsp. tengcongensis (strain DSM 15242 / JCM 11007 / NBRC 100824 / MB4) (Thermoanaerobacter tengcongensis).